A 355-amino-acid chain; its full sequence is Holliday junction branch migration complex subunit RuvB (355 aa).

The tract at residues 4 to 190 (TDKLAAERII…FGIVARLEFY (187 aa)) is large ATPase domain (RuvB-L). Residues L29, R30, G71, K74, T75, T76, 137–139 (EDY), R180, Y190, and R227 contribute to the ATP site. Residue T75 participates in Mg(2+) binding. The tract at residues 191–261 (NAEQLARIVT…VADAALKMLD (71 aa)) is small ATPAse domain (RuvB-S). The segment at 264–355 (AVGFDLMDRK…LPGLWDSAAT (92 aa)) is head domain (RuvB-H). Residues R300, R319, and R324 each contribute to the DNA site.

The protein belongs to the RuvB family. As to quaternary structure, homohexamer. Forms an RuvA(8)-RuvB(12)-Holliday junction (HJ) complex. HJ DNA is sandwiched between 2 RuvA tetramers; dsDNA enters through RuvA and exits via RuvB. An RuvB hexamer assembles on each DNA strand where it exits the tetramer. Each RuvB hexamer is contacted by two RuvA subunits (via domain III) on 2 adjacent RuvB subunits; this complex drives branch migration. In the full resolvosome a probable DNA-RuvA(4)-RuvB(12)-RuvC(2) complex forms which resolves the HJ.

The protein resides in the cytoplasm. It catalyses the reaction ATP + H2O = ADP + phosphate + H(+). Its function is as follows. The RuvA-RuvB-RuvC complex processes Holliday junction (HJ) DNA during genetic recombination and DNA repair, while the RuvA-RuvB complex plays an important role in the rescue of blocked DNA replication forks via replication fork reversal (RFR). RuvA specifically binds to HJ cruciform DNA, conferring on it an open structure. The RuvB hexamer acts as an ATP-dependent pump, pulling dsDNA into and through the RuvAB complex. RuvB forms 2 homohexamers on either side of HJ DNA bound by 1 or 2 RuvA tetramers; 4 subunits per hexamer contact DNA at a time. Coordinated motions by a converter formed by DNA-disengaged RuvB subunits stimulates ATP hydrolysis and nucleotide exchange. Immobilization of the converter enables RuvB to convert the ATP-contained energy into a lever motion, pulling 2 nucleotides of DNA out of the RuvA tetramer per ATP hydrolyzed, thus driving DNA branch migration. The RuvB motors rotate together with the DNA substrate, which together with the progressing nucleotide cycle form the mechanistic basis for DNA recombination by continuous HJ branch migration. Branch migration allows RuvC to scan DNA until it finds its consensus sequence, where it cleaves and resolves cruciform DNA. In Paraburkholderia xenovorans (strain LB400), this protein is Holliday junction branch migration complex subunit RuvB.